The sequence spans 437 residues: Tol-Pal system protein TolB (437 aa).

Residues 1–30 (MLPTPSRSHKLSGYAAVLFFLWLVCSPAQA) form the signal peptide. The span at 410–423 (SDGRTRQQLSTQTG) shows a compositional bias: polar residues. The interval 410–437 (SDGRTRQQLSTQTGDIREPAWGPLRRLQ) is disordered.

This sequence belongs to the TolB family. The Tol-Pal system is composed of five core proteins: the inner membrane proteins TolA, TolQ and TolR, the periplasmic protein TolB and the outer membrane protein Pal. They form a network linking the inner and outer membranes and the peptidoglycan layer.

The protein resides in the periplasm. Its function is as follows. Part of the Tol-Pal system, which plays a role in outer membrane invagination during cell division and is important for maintaining outer membrane integrity. The protein is Tol-Pal system protein TolB of Nitrosospira multiformis (strain ATCC 25196 / NCIMB 11849 / C 71).